Consider the following 638-residue polypeptide: Sorting nexin-41 (638 aa).

Over residues 1–14 (MDSDTSPNPFASSP) the composition is skewed to low complexity. The segment at 1–69 (MDSDTSPNPF…MGATVPGPKP (69 aa)) is disordered. Residues 15 to 30 (PSSPSPRPSLPPPVPR) are compositionally biased toward pro residues. A PX domain is found at 84–201 (GEQVHIVDAL…HRFLEEDVSW (118 aa)). A 1,2-diacyl-sn-glycero-3-phospho-(1D-myo-inositol-3-phosphate)-binding residues include Arg-118, Ser-120, Lys-144, and Arg-168. Disordered stretches follow at residues 215–239 (KNPL…SEAP), 408–432 (LERG…RERA), and 545–638 (PHPN…LGPL). Residues 225 to 239 (PTFQPTTPTSPSEAP) are compositionally biased toward low complexity. Residues 423–432 (EAARDERERA) show a composition bias toward basic and acidic residues. Residues 552–562 (QTQTQVQSQQS) are compositionally biased toward low complexity. Basic and acidic residues predominate over residues 585-601 (MKNEIERVEIEIADKPL).

Belongs to the sorting nexin family.

It localises to the endosome membrane. Its subcellular location is the endomembrane system. In terms of biological role, may be required for cytoplasm to vacuole transport (Cvt) and pexophagy. This is Sorting nexin-41 (SNX41) from Cryptococcus neoformans var. neoformans serotype D (strain B-3501A) (Filobasidiella neoformans).